The primary structure comprises 169 residues: E1B protein, small T-antigen (169 aa).

The segment at 147–169 is disordered; sequence GSVVEEEQGEEHLARDSDDPFFD. Residues 156 to 169 show a composition bias toward basic and acidic residues; sequence EEHLARDSDDPFFD.

It belongs to the adenoviridae E1B 19 kDa protein family.

This Canine adenovirus serotype 1 (strain Glaxo) (CAdV-1) protein is E1B protein, small T-antigen.